The following is a 221-amino-acid chain: Interleukin-12 subunit alpha (221 aa).

A signal peptide spans Met-1–Gly-25. Cystine bridges form between Cys-39/Cys-112, Cys-66/Cys-198, and Cys-87/Cys-125. 2 N-linked (GlcNAc...) asparagine glycosylation sites follow: Asn-41 and Asn-95.

The protein belongs to the IL-6 superfamily. In terms of assembly, heterodimer with IL12B; disulfide-linked. This heterodimer is known as interleukin IL-12. Heterodimer with EBI3/IL27B; not disulfide-linked. This heterodimer is known as interleukin IL-35. Interacts with NBR1; this interaction promotes IL-12 secretion.

It localises to the secreted. Functionally, heterodimerizes with IL12B to form the IL-12 cytokine or with EBI3/IL27B to form the IL-35 cytokine. IL-12 is primarily produced by professional antigen-presenting cells (APCs) such as B-cells and dendritic cells (DCs) as well as macrophages and granulocytes and regulates T-cell and natural killer-cell responses, induces the production of interferon-gamma (IFN-gamma), favors the differentiation of T-helper 1 (Th1) cells and is an important link between innate resistance and adaptive immunity. Mechanistically, exerts its biological effects through a receptor composed of IL12R1 and IL12R2 subunits. Binding to the receptor results in the rapid tyrosine phosphorylation of a number of cellular substrates including the JAK family kinases TYK2 and JAK2. In turn, recruited STAT4 gets phosphorylated and translocates to the nucleus where it regulates cytokine/growth factor responsive genes. As part of IL-35, plays essential roles in maintaining the immune homeostasis of the liver microenvironment and also functions as an immune-suppressive cytokine. Mediates biological events through unconventional receptors composed of IL12RB2 and gp130/IL6ST heterodimers or homodimers. Signaling requires the transcription factors STAT1 and STAT4, which form a unique heterodimer that binds to distinct DNA sites. The chain is Interleukin-12 subunit alpha (IL12A) from Cervus elaphus (Red deer).